A 164-amino-acid polypeptide reads, in one-letter code: MANSVMATEQLCYIPCNFCNIILAVNVPCSSLFDIVTVRCGHCTNLWSVNMAAALQSLSRPNFQATNYAVPEYGSSSRSHTKIPSRISTRTITEQRIVNRPPEKRQRVPSAYNQFIKEEIQRIKANNPDISHREAFSTAAKNWAHFPHIHFGLMLESNKQAKIA.

Residues 16–43 form a C4-type zinc finger; that stretch reads CNFCNIILAVNVPCSSLFDIVTVRCGHC.

This sequence belongs to the YABBY family. As to quaternary structure, binds to LUG and LUH; these complexes promote adaxial cell identity in leaves as well as embryonic shoot apical meristem (SAM) initiation and postembryonic SAM maintenance. Interacts with SPL/NZZ and SPEAR2.

It is found in the nucleus. Promotes adaxial cell identity. Regulates the initiation of embryonic shoot apical meristem (SAM) development. The polypeptide is Axial regulator YABBY 5 (YAB5) (Arabidopsis thaliana (Mouse-ear cress)).